We begin with the raw amino-acid sequence, 225 residues long: Increased recombination centers protein 22 (225 aa).

An N-terminal signal peptide occupies residues 1-24 (MRFFMLIGFNLLTALSSFCAAISA). At 25–169 (NNSDNVEHEQ…PTLFEIVSPP (145 aa)) the chain is on the lumenal side. The helical transmembrane segment at 170–190 (ISFFNPQFLSVQVIFLAIIGG) threads the bilayer. Over 191–225 (VSYYYMKSKTNQRPSKKSATVKKVDESWLPETYKK) the chain is Cytoplasmic. The segment at 203–225 (RPSKKSATVKKVDESWLPETYKK) is disordered. Positions 212–225 (KKVDESWLPETYKK) are enriched in basic and acidic residues.

Belongs to the IRC22 family.

It is found in the endoplasmic reticulum membrane. In terms of biological role, is probably involved in a pathway contributing to genomic integrity. This is Increased recombination centers protein 22 (IRC22) from Saccharomyces cerevisiae (strain AWRI1631) (Baker's yeast).